The chain runs to 318 residues: Protein W (318 aa).

2 disordered regions span residues 1–23 (MDQD…GGRE) and 38–318 (SEPT…KKGA). Over residues 7–20 (ILKEDSEVEREAPG) the composition is skewed to basic and acidic residues. A compositionally biased stretch (polar residues) spans 50-59 (LHNTINTPQG). Serine 68 carries the phosphoserine; by host modification. Basic and acidic residues predominate over residues 83–101 (RSGEESRVSGRTSKPEAEA). Residue serine 125 is modified to Phosphoserine; by host. A compositionally biased stretch (basic and acidic residues) spans 150–168 (GIEDENREMAAHPDKRGED). Over residues 191–206 (ASNNGRSMEPGSSHSA) the composition is skewed to polar residues. Residues serine 192, serine 249, serine 257, and serine 260 each carry the phosphoserine; by host modification.

The protein is Protein W (P/V/C) of Sendai virus (strain Fushimi) (SeV).